Here is a 275-residue protein sequence, read N- to C-terminus: Undecaprenyl-diphosphatase (275 aa).

The next 8 helical transmembrane spans lie at 2–22, 43–63, 83–103, 111–131, 161–181, 186–206, 225–245, and 255–275; these read LDIF…FLPI, FINM…IVIY, WQIW…GLPL, MTSW…FIVL, VLSM…AMLI, YVAT…ASLL, ILLV…KFLL, and PFGW…LVFA.

The protein belongs to the UppP family.

The protein localises to the cell membrane. It catalyses the reaction di-trans,octa-cis-undecaprenyl diphosphate + H2O = di-trans,octa-cis-undecaprenyl phosphate + phosphate + H(+). Functionally, catalyzes the dephosphorylation of undecaprenyl diphosphate (UPP). Confers resistance to bacitracin. In Lactobacillus delbrueckii subsp. bulgaricus (strain ATCC 11842 / DSM 20081 / BCRC 10696 / JCM 1002 / NBRC 13953 / NCIMB 11778 / NCTC 12712 / WDCM 00102 / Lb 14), this protein is Undecaprenyl-diphosphatase.